The sequence spans 569 residues: Adenine deaminase (569 aa).

Belongs to the metallo-dependent hydrolases superfamily. Adenine deaminase family. Mn(2+) is required as a cofactor.

The enzyme catalyses adenine + H2O + H(+) = hypoxanthine + NH4(+). This chain is Adenine deaminase, found in Desulfatibacillum aliphaticivorans.